The chain runs to 503 residues: EZH inhibitory protein (503 aa).

Basic and acidic residues predominate over residues methionine 1–aspartate 16. Disordered regions lie at residues methionine 1–alanine 72, histidine 97–serine 462, and valine 483–proline 503. Residues proline 41–alanine 72 show a composition bias toward low complexity. The segment covering histidine 97–histidine 107 has biased composition (basic and acidic residues). Polar residues predominate over residues tyrosine 184–glutamine 197. Serine 259 carries the phosphoserine modification. The span at leucine 345–alanine 366 shows a compositional bias: low complexity. The sufficient for interaction with EZH2 stretch occupies residues tryptophan 401–serine 409. The necessary and sufficient for inhibition of PRC2/EED-EZH1 and PRC2/EED-EZH2 complex activity stretch occupies residues alanine 403–glutamine 423. The span at serine 428–proline 453 shows a compositional bias: low complexity.

In terms of assembly, interacts with PRC2/EED-EZH1 complex member EZH1 and with PRC2/EED-EZH2 complex member EZH2; the interaction blocks EZH1/EZH2 methyltransferase activity. Interacts (via C-terminus) with SUZ12 which is a member of the PRC2/EED-EZH1 and PRC2/EED-EZH2 complexes. As to expression, in testis, detected in male germ cells inside the seminiferous tubules, especially in spermatogonia and round spermatids (at protein level). In the ovary, expressed in primordial follicles and oocytes but not the external follicle cells (at protein level).

It is found in the nucleus. It localises to the cytoplasm. Functionally, inhibits PRC2/EED-EZH1 and PRC2/EED-EZH2 complex function by inhibiting EZH1/EZH2 methyltransferase activity, thereby causing down-regulation of histone H3 trimethylation on 'Lys-27' (H3K27me3). Probably inhibits methyltransferase activity by limiting the stimulatory effect of cofactors such as AEBP2 and JARID2. Inhibits H3K27me3 deposition during spermatogenesis and oogenesis. This chain is EZH inhibitory protein, found in Homo sapiens (Human).